The following is a 459-amino-acid chain: Polycomb protein mes-6 (459 aa).

5 WD repeats span residues 146 to 186 (SVGW…CLIV), 192 to 231 (CHAG…VKEH), 305 to 346 (MHSD…GEVE), 370 to 409 (SGSA…ETNP), and 415 to 454 (VGSR…VDAK).

Belongs to the WD repeat ESC family. In terms of assembly, interacts directly with the N-terminal domain of mes-2. Forms a heterotrimeric complex with mes-2 and mes-3. Does not interact with mes-4. As to expression, in adults, it is predominantly expressed in the germline, and weakly expressed in intestinal cells.

The protein resides in the nucleus. Functionally, polycomb group (PcG) protein. PcG proteins act by forming multiprotein complexes, which are required to maintain the transcriptionally repressive state of homeotic genes throughout development. In association with the nfya-1-NF-Y complex, may play a role in repressing the expression of the homeobox protein egl-5 in tissues such as the head. PcG proteins are not required to initiate repression, but to maintain it during later stages of development. The mes-2/mes-3/mes-6 complex may participate in the global inactivation of the X chromosomes in germline cells. The complex may act via methylation of histone H3 'Lys-27', rendering chromatin heritably changed in its expressibility. This complex is required to exclude mes-4 from the inactivated X-chromosomes in germline cells. Required for small-RNA-induced H3K27 trimethylation. This Caenorhabditis elegans protein is Polycomb protein mes-6.